The following is a 660-amino-acid chain: DNA mismatch repair protein MutL (660 aa).

This sequence belongs to the DNA mismatch repair MutL/HexB family.

Functionally, this protein is involved in the repair of mismatches in DNA. It is required for dam-dependent methyl-directed DNA mismatch repair. May act as a 'molecular matchmaker', a protein that promotes the formation of a stable complex between two or more DNA-binding proteins in an ATP-dependent manner without itself being part of a final effector complex. This chain is DNA mismatch repair protein MutL, found in Solibacter usitatus (strain Ellin6076).